The chain runs to 83 residues: RNA-binding protein Hfq (83 aa).

The 60-residue stretch at Asp-10–Val-69 folds into the Sm domain.

The protein belongs to the Hfq family. Homohexamer.

Its function is as follows. RNA chaperone that binds small regulatory RNA (sRNAs) and mRNAs to facilitate mRNA translational regulation in response to envelope stress, environmental stress and changes in metabolite concentrations. Also binds with high specificity to tRNAs. The polypeptide is RNA-binding protein Hfq (Delftia acidovorans (strain DSM 14801 / SPH-1)).